Here is a 200-residue protein sequence, read N- to C-terminus: Small ribosomal subunit protein uS4 (200 aa).

The disordered stretch occupies residues 22-42; sequence TGKELQKRPYPPGQHGPGQRR. Residues 92–152 form the S4 RNA-binding domain; that stretch reads SRLDNLVYRL…EKSRNLQVIK (61 aa).

It belongs to the universal ribosomal protein uS4 family. In terms of assembly, part of the 30S ribosomal subunit. Contacts protein S5. The interaction surface between S4 and S5 is involved in control of translational fidelity.

Functionally, one of the primary rRNA binding proteins, it binds directly to 16S rRNA where it nucleates assembly of the body of the 30S subunit. In terms of biological role, with S5 and S12 plays an important role in translational accuracy. The polypeptide is Small ribosomal subunit protein uS4 (Geobacillus kaustophilus (strain HTA426)).